Here is a 172-residue protein sequence, read N- to C-terminus: Crossover junction endodeoxyribonuclease RuvC (172 aa).

Active-site residues include aspartate 7, glutamate 68, and aspartate 141. Aspartate 7, glutamate 68, and aspartate 141 together coordinate Mg(2+).

It belongs to the RuvC family. As to quaternary structure, homodimer which binds Holliday junction (HJ) DNA. The HJ becomes 2-fold symmetrical on binding to RuvC with unstacked arms; it has a different conformation from HJ DNA in complex with RuvA. In the full resolvosome a probable DNA-RuvA(4)-RuvB(12)-RuvC(2) complex forms which resolves the HJ. Requires Mg(2+) as cofactor.

The protein resides in the cytoplasm. The catalysed reaction is Endonucleolytic cleavage at a junction such as a reciprocal single-stranded crossover between two homologous DNA duplexes (Holliday junction).. Functionally, the RuvA-RuvB-RuvC complex processes Holliday junction (HJ) DNA during genetic recombination and DNA repair. Endonuclease that resolves HJ intermediates. Cleaves cruciform DNA by making single-stranded nicks across the HJ at symmetrical positions within the homologous arms, yielding a 5'-phosphate and a 3'-hydroxyl group; requires a central core of homology in the junction. The consensus cleavage sequence is 5'-(A/T)TT(C/G)-3'. Cleavage occurs on the 3'-side of the TT dinucleotide at the point of strand exchange. HJ branch migration catalyzed by RuvA-RuvB allows RuvC to scan DNA until it finds its consensus sequence, where it cleaves and resolves the cruciform DNA. This is Crossover junction endodeoxyribonuclease RuvC from Frankia casuarinae (strain DSM 45818 / CECT 9043 / HFP020203 / CcI3).